We begin with the raw amino-acid sequence, 329 residues long: Serine dehydratase-like (329 aa).

M1 is modified (N-acetylmethionine). K48 is subject to N6-(pyridoxal phosphate)lysine.

The protein belongs to the serine/threonine dehydratase family. Monomer. Homodimer. Pyridoxal 5'-phosphate serves as cofactor.

The enzyme catalyses L-serine = pyruvate + NH4(+). It carries out the reaction L-threonine = 2-oxobutanoate + NH4(+). The catalysed reaction is L-glutamate = D-glutamate. With respect to regulation, serine dehydratase activity is inhibited by manganese chloride, ferrous chloride, cobalt chloride, cupric chloride, nickel chloride and zinc chloride. Glutamate racemase activity is inhibited by manganese chloride, ferrous chloride, cupric chloride and zinc chloride. In terms of biological role, catalyzes the pyridoxal-phosphate-dependent dehydrative deamination of L-threonine and L-serine to ammonia and alpha-ketobutyrate and pyruvate, respectively. Also exhibits racemase activity towards L-glutamate and D-glutamate. In Rattus norvegicus (Rat), this protein is Serine dehydratase-like (Sdsl).